A 211-amino-acid polypeptide reads, in one-letter code: Protein DEHYDRATION-INDUCED 19 homolog 7 (211 aa).

The residue at position 113 (threonine 113) is a Phosphothreonine. The tract at residues 163–194 (GDSVAQVSPKDTSKSKIQQESFSNEDQEKAKK) is disordered. Over residues 167–186 (AQVSPKDTSKSKIQQESFSN) the composition is skewed to polar residues.

This sequence belongs to the Di19 family. Post-translationally, not phosphorylated in vitro by CPK3 or CPK11. As to expression, expressed in seedlings, roots, leaves, stems, flowers and siliques.

It localises to the nucleus. Functionally, involved in both red and blue light signaling. The chain is Protein DEHYDRATION-INDUCED 19 homolog 7 (DI19-7) from Arabidopsis thaliana (Mouse-ear cress).